Reading from the N-terminus, the 127-residue chain is Aspartate 1-decarboxylase (127 aa).

Serine 25 acts as the Schiff-base intermediate with substrate; via pyruvic acid in catalysis. Position 25 is a pyruvic acid (Ser) (serine 25). Substrate is bound at residue threonine 57. Tyrosine 58 (proton donor) is an active-site residue. Substrate is bound at residue 73–75 (GAA).

It belongs to the PanD family. As to quaternary structure, heterooctamer of four alpha and four beta subunits. Pyruvate serves as cofactor. Is synthesized initially as an inactive proenzyme, which is activated by self-cleavage at a specific serine bond to produce a beta-subunit with a hydroxyl group at its C-terminus and an alpha-subunit with a pyruvoyl group at its N-terminus.

The protein localises to the cytoplasm. It catalyses the reaction L-aspartate + H(+) = beta-alanine + CO2. Its pathway is cofactor biosynthesis; (R)-pantothenate biosynthesis; beta-alanine from L-aspartate: step 1/1. Catalyzes the pyruvoyl-dependent decarboxylation of aspartate to produce beta-alanine. In Neisseria meningitidis serogroup C / serotype 2a (strain ATCC 700532 / DSM 15464 / FAM18), this protein is Aspartate 1-decarboxylase.